Reading from the N-terminus, the 187-residue chain is NADH-quinone oxidoreductase subunit B (187 aa).

[4Fe-4S] cluster is bound by residues Cys-46, Cys-47, Cys-112, and Cys-141.

It belongs to the complex I 20 kDa subunit family. In terms of assembly, NDH-1 is composed of 14 different subunits. Subunits NuoB, C, D, E, F, and G constitute the peripheral sector of the complex. [4Fe-4S] cluster serves as cofactor.

The protein localises to the cell inner membrane. The enzyme catalyses a quinone + NADH + 5 H(+)(in) = a quinol + NAD(+) + 4 H(+)(out). Functionally, NDH-1 shuttles electrons from NADH, via FMN and iron-sulfur (Fe-S) centers, to quinones in the respiratory chain. The immediate electron acceptor for the enzyme in this species is believed to be ubiquinone. Couples the redox reaction to proton translocation (for every two electrons transferred, four hydrogen ions are translocated across the cytoplasmic membrane), and thus conserves the redox energy in a proton gradient. The sequence is that of NADH-quinone oxidoreductase subunit B from Myxococcus xanthus (strain DK1622).